The sequence spans 279 residues: HTH-type transcriptional activator RhaS (279 aa).

The region spanning 175-273 (QALLGWLQNN…SQAPKSLRHQ (99 aa)) is the HTH araC/xylS-type domain. 2 consecutive DNA-binding regions (H-T-H motif) follow at residues 192–213 (GSLADRFSLPLRTLHRQLKQHT) and 240–263 (ITTIAHACGFSDSNHFSTQFRKAF).

As to quaternary structure, binds DNA as a dimer.

Its subcellular location is the cytoplasm. Activates expression of the rhaBAD and rhaT operons. This is HTH-type transcriptional activator RhaS from Pectobacterium carotovorum subsp. carotovorum (strain PC1).